Here is a 380-residue protein sequence, read N- to C-terminus: Probable protein phosphatase 2C 34 (380 aa).

In terms of domain architecture, PPM-type phosphatase spans 32–335 (AAGEFSMAAA…DDISVIVVYL (304 aa)). Residues aspartate 66, glycine 67, aspartate 267, and aspartate 326 each coordinate Mn(2+).

It belongs to the PP2C family. Requires Mg(2+) as cofactor. Mn(2+) is required as a cofactor.

The enzyme catalyses O-phospho-L-seryl-[protein] + H2O = L-seryl-[protein] + phosphate. The catalysed reaction is O-phospho-L-threonyl-[protein] + H2O = L-threonyl-[protein] + phosphate. In Oryza sativa subsp. indica (Rice), this protein is Probable protein phosphatase 2C 34 (BIPP2C2).